The sequence spans 84 residues: MNNDLQPIVLVDEEGIETTFNVVTKLDIEEKEYFLLSPEGEEDVVIAMQVVQDEDGEETLAPVENDFEIEMIEEAYATLFAEEE.

The protein belongs to the UPF0473 family.

The polypeptide is UPF0473 protein CPF_2030 (Clostridium perfringens (strain ATCC 13124 / DSM 756 / JCM 1290 / NCIMB 6125 / NCTC 8237 / Type A)).